The following is a 226-amino-acid chain: Urease accessory protein UreF (226 aa).

This sequence belongs to the UreF family. UreD, UreF and UreG form a complex that acts as a GTP-hydrolysis-dependent molecular chaperone, activating the urease apoprotein by helping to assemble the nickel containing metallocenter of UreC. The UreE protein probably delivers the nickel.

The protein localises to the cytoplasm. Its function is as follows. Required for maturation of urease via the functional incorporation of the urease nickel metallocenter. The sequence is that of Urease accessory protein UreF from Janthinobacterium sp. (strain Marseille) (Minibacterium massiliensis).